Here is a 399-residue protein sequence, read N- to C-terminus: Acetate kinase (399 aa).

Asparagine 7 is a Mg(2+) binding site. ATP is bound at residue lysine 14. Arginine 91 is a substrate binding site. Residue aspartate 148 is the Proton donor/acceptor of the active site. Residues 208-212, 283-285, and 331-335 each bind ATP; these read HLGNG, DFR, and GLGEN. A Mg(2+)-binding site is contributed by glutamate 384.

The protein belongs to the acetokinase family. In terms of assembly, homodimer. It depends on Mg(2+) as a cofactor. Requires Mn(2+) as cofactor.

The protein localises to the cytoplasm. It catalyses the reaction acetate + ATP = acetyl phosphate + ADP. Its pathway is metabolic intermediate biosynthesis; acetyl-CoA biosynthesis; acetyl-CoA from acetate: step 1/2. Functionally, catalyzes the formation of acetyl phosphate from acetate and ATP. Can also catalyze the reverse reaction. In Desulfitobacterium hafniense (strain DSM 10664 / DCB-2), this protein is Acetate kinase.